The chain runs to 582 residues: Phosphoglucomutase, cytoplasmic (582 aa).

Residues arginine 25 and serine 124 each contribute to the alpha-D-glucose 1,6-bisphosphate site. Serine 124 (phosphoserine intermediate) is an active-site residue. Residues serine 124, aspartate 299, aspartate 301, and aspartate 303 each coordinate Mg(2+). A Phosphoserine modification is found at serine 124. Alpha-D-glucose 1,6-bisphosphate contacts are provided by aspartate 303, arginine 304, threonine 367, glutamate 386, serine 388, and lysine 399.

It belongs to the phosphohexose mutase family. Monomer. Mg(2+) serves as cofactor.

Its subcellular location is the cytoplasm. It carries out the reaction alpha-D-glucose 1-phosphate = alpha-D-glucose 6-phosphate. It catalyses the reaction O-phospho-L-seryl-[protein] + alpha-D-glucose 1-phosphate = alpha-D-glucose 1,6-bisphosphate + L-seryl-[protein]. The enzyme catalyses alpha-D-glucose 1,6-bisphosphate + L-seryl-[protein] = O-phospho-L-seryl-[protein] + alpha-D-glucose 6-phosphate. In terms of biological role, catalyzes the reversible isomerization of alpha-D-glucose 1-phosphate to alpha-D-glucose 6-phosphate. The mechanism proceeds via the intermediate compound alpha-D-glucose 1,6-bisphosphate. This enzyme participates in both the breakdown and synthesis of glucose. In Populus tremula (European aspen), this protein is Phosphoglucomutase, cytoplasmic (PGM1).